The primary structure comprises 221 residues: Glutathione peroxidase (221 aa).

The signal sequence occupies residues 1–19 (MFIQLLILSYAILLQLIAT). An N-linked (GlcNAc...) asparagine glycan is attached at Asn28. Residue Cys72 is part of the active site. 2 N-linked (GlcNAc...) asparagine glycosylation sites follow: Asn87 and Asn90.

This sequence belongs to the glutathione peroxidase family. As to quaternary structure, homotetramer.

It is found in the secreted. The protein localises to the extracellular space. The enzyme catalyses 2 glutathione + H2O2 = glutathione disulfide + 2 H2O. The chain is Glutathione peroxidase from Dirofilaria immitis (Canine heartworm).